The primary structure comprises 183 residues: Thioredoxin-like protein CITRX, chloroplastic (183 aa).

The N-terminal 81 residues, 1–81, are a transit peptide targeting the chloroplast; that stretch reads MALVQSRTFP…REDYLVKKLS (81 aa). The region spanning 82-183 is the Thioredoxin domain; sequence AQELQELVKG…MMHDIIDNEM (102 aa). Catalysis depends on nucleophile residues Cys106 and Cys109. A disulfide bridge connects residues Cys106 and Cys109.

This sequence belongs to the thioredoxin family. Plant CITRX-type subfamily. In terms of assembly, interacts with FLN1 and FLN2. Interacts with MRL7.

It localises to the plastid. The protein localises to the chloroplast. Its function is as follows. Thiol-disulfide oxidoreductase that plays a role in proper chloroplast development, most likely through regulating plastid-encoded polymerase (PEP) dependent chloroplast transcription. Acts as a component of the transcriptionally active plastid chromosome that is required for plastid gene expression. The protein is Thioredoxin-like protein CITRX, chloroplastic of Arabidopsis thaliana (Mouse-ear cress).